The primary structure comprises 404 residues: DNA gyrase subunit B (404 aa).

The 84-residue stretch at 321-404 (SEIYIVEGDS…VIIMTDADVD (84 aa)) folds into the Toprim domain. Mg(2+) is bound by residues Glu327, Asp400, and Asp402.

It belongs to the type II topoisomerase GyrB family. Heterotetramer, composed of two GyrA and two GyrB chains. In the heterotetramer, GyrA contains the active site tyrosine that forms a transient covalent intermediate with DNA, while GyrB binds cofactors and catalyzes ATP hydrolysis. The cofactor is Mg(2+). Mn(2+) serves as cofactor. It depends on Ca(2+) as a cofactor.

The protein resides in the cytoplasm. The enzyme catalyses ATP-dependent breakage, passage and rejoining of double-stranded DNA.. A type II topoisomerase that negatively supercoils closed circular double-stranded (ds) DNA in an ATP-dependent manner to modulate DNA topology and maintain chromosomes in an underwound state. Negative supercoiling favors strand separation, and DNA replication, transcription, recombination and repair, all of which involve strand separation. Also able to catalyze the interconversion of other topological isomers of dsDNA rings, including catenanes and knotted rings. Type II topoisomerases break and join 2 DNA strands simultaneously in an ATP-dependent manner. This chain is DNA gyrase subunit B (gyrB), found in Bacillus mycoides.